The sequence spans 258 residues: Imidazole glycerol phosphate synthase subunit HisF (258 aa).

Catalysis depends on residues D11 and D130.

Belongs to the HisA/HisF family. In terms of assembly, heterodimer of HisH and HisF.

It is found in the cytoplasm. The enzyme catalyses 5-[(5-phospho-1-deoxy-D-ribulos-1-ylimino)methylamino]-1-(5-phospho-beta-D-ribosyl)imidazole-4-carboxamide + L-glutamine = D-erythro-1-(imidazol-4-yl)glycerol 3-phosphate + 5-amino-1-(5-phospho-beta-D-ribosyl)imidazole-4-carboxamide + L-glutamate + H(+). The protein operates within amino-acid biosynthesis; L-histidine biosynthesis; L-histidine from 5-phospho-alpha-D-ribose 1-diphosphate: step 5/9. In terms of biological role, IGPS catalyzes the conversion of PRFAR and glutamine to IGP, AICAR and glutamate. The HisF subunit catalyzes the cyclization activity that produces IGP and AICAR from PRFAR using the ammonia provided by the HisH subunit. This chain is Imidazole glycerol phosphate synthase subunit HisF, found in Shigella dysenteriae serotype 1 (strain Sd197).